The primary structure comprises 289 residues: Transcription factor MafA (289 aa).

Residues 52–73 are compositionally biased toward low complexity; sequence STPISTPCSSVPSSPSFCAPSP. Disordered stretches follow at residues 52–87 and 126–164; these read STPI…PNAA and HHHH…HHHH. Residues 74–87 show a composition bias toward polar residues; the sequence is GAQSGVNPSNPNAA. The span at 152 to 164 shows a compositional bias: basic residues; that stretch reads GHHHQVHHHHHHH. Residues 201–226 are basic motif; sequence RLKQKRRTLKNRGYAQSCRYKRVQQR. The bZIP domain maps to 201–264; sequence RLKQKRRTLK…DLYKDKYEKL (64 aa). Residues 229 to 250 are leucine-zipper; it reads LETEKCQLQSQVEQLKQEVSRL. Residues 266–289 are disordered; that stretch reads SRSFTTRESPPQGNPGKANADFFM. Residues 267-276 are compositionally biased toward polar residues; sequence RSFTTRESPP.

This sequence belongs to the bZIP family. Maf subfamily.

It localises to the nucleus. In terms of biological role, transcription factor, possibly involved in transcription regulation during lens development. This chain is Transcription factor MafA (mafa), found in Xenopus tropicalis (Western clawed frog).